The sequence spans 185 residues: NADH-dependent FMN reductase AsuE2 (185 aa).

Residues 1 to 13 (MSTHTARRAGATA) show a composition bias toward low complexity. Residues 1–24 (MSTHTARRAGATAGHDRDRGTEPG) are disordered. The span at 14–24 (GHDRDRGTEPG) shows a compositional bias: basic and acidic residues.

This sequence belongs to the non-flavoprotein flavin reductase family. In terms of assembly, does not interact with AsuE1, suggesting a possible transient interaction between the two enzymes instead of formation of a stable complex.

The enzyme catalyses FMNH2 + NAD(+) = FMN + NADH + 2 H(+). It functions in the pathway antibiotic biosynthesis. Its function is as follows. Involved in the biosynthesis of the antibiotic asukamycin. When flavin concentration is low, AsuE2 assists the protoasukamycin 4-monooxygenase AsuE1 by providing a reduced form of flavin, enhancing AsuE1 activity. In Streptomyces nodosus subsp. asukaensis, this protein is NADH-dependent FMN reductase AsuE2.